A 507-amino-acid chain; its full sequence is Glycerol kinase 2 (507 aa).

Thr-16 provides a ligand contact to ADP. ATP contacts are provided by Thr-16, Thr-17, and Ser-18. Thr-16 lines the sn-glycerol 3-phosphate pocket. Arg-20 is a binding site for ADP. Arg-86, Glu-87, Tyr-138, and Asp-248 together coordinate sn-glycerol 3-phosphate. Residues Arg-86, Glu-87, Tyr-138, Asp-248, and Gln-249 each coordinate glycerol. 2 residues coordinate ADP: Thr-270 and Gly-314. Positions 270, 314, 318, and 415 each coordinate ATP. Residues Gly-415 and Asn-419 each contribute to the ADP site.

This sequence belongs to the FGGY kinase family.

It carries out the reaction glycerol + ATP = sn-glycerol 3-phosphate + ADP + H(+). It participates in polyol metabolism; glycerol degradation via glycerol kinase pathway; sn-glycerol 3-phosphate from glycerol: step 1/1. With respect to regulation, inhibited by fructose 1,6-bisphosphate (FBP). In terms of biological role, key enzyme in the regulation of glycerol uptake and metabolism. Catalyzes the phosphorylation of glycerol to yield sn-glycerol 3-phosphate. In Streptomyces avermitilis (strain ATCC 31267 / DSM 46492 / JCM 5070 / NBRC 14893 / NCIMB 12804 / NRRL 8165 / MA-4680), this protein is Glycerol kinase 2.